We begin with the raw amino-acid sequence, 101 residues long: Small ribosomal subunit protein uS14 (101 aa).

Residues 1–10 (MAKKSSIEKN) are compositionally biased toward basic and acidic residues. The disordered stretch occupies residues 1–24 (MAKKSSIEKNNRRKRLTKNAAPKR). A compositionally biased stretch (basic residues) spans 11–24 (NRRKRLTKNAAPKR).

Belongs to the universal ribosomal protein uS14 family. Part of the 30S ribosomal subunit. Contacts proteins S3 and S10.

Functionally, binds 16S rRNA, required for the assembly of 30S particles and may also be responsible for determining the conformation of the 16S rRNA at the A site. The protein is Small ribosomal subunit protein uS14 of Rhodopseudomonas palustris (strain BisB18).